We begin with the raw amino-acid sequence, 858 residues long: Coiled-coil and C2 domain-containing protein 1B (858 aa).

5 disordered regions span residues 112–164 (VLGV…GASQ), 180–199 (AAAS…CERG), 204–284 (ESQL…ALLS), 329–352 (VDLS…APTA), and 470–533 (EKLA…SPSV). The segment covering 114–143 (GVDEETEPLDGDEVADPGGSEEENGLEDTE) has biased composition (acidic residues). The segment covering 153–164 (ASAPAAQAGASQ) has biased composition (low complexity). A coiled-coil region spans residues 166–212 (LHALLEERIHNYREAAASAKEAGEAAKARRCERGLKTLESQLASVRR). Basic and acidic residues predominate over residues 186–199 (EAGEAAKARRCERG). Residue Ser209 is modified to Phosphoserine. Residues 520-532 (PRASSSKESPSPS) are compositionally biased toward low complexity. At Ser593 the chain carries Phosphoserine. A Phosphothreonine modification is found at Thr596. Residues 611 to 635 (RLSQKAEEVYAQLQKMLLEQQEKCL) adopt a coiled-coil conformation. The C2 domain occupies 676 to 815 (DPPTHHFELK…ENECEIREIV (140 aa)).

This sequence belongs to the CC2D1 family. Interacts with CHMP4B. As to expression, widely distributed in brain and peripheral tissues.

The protein localises to the nucleus. Functionally, transcription factor that binds specifically to the DRE (dual repressor element) and represses HTR1A gene transcription in neuronal cells. This chain is Coiled-coil and C2 domain-containing protein 1B (CC2D1B), found in Homo sapiens (Human).